The sequence spans 250 residues: Malonyl-[acyl-carrier protein] O-methyltransferase (250 aa).

The protein belongs to the methyltransferase superfamily.

It catalyses the reaction malonyl-[ACP] + S-adenosyl-L-methionine = malonyl-[ACP] methyl ester + S-adenosyl-L-homocysteine. It participates in cofactor biosynthesis; biotin biosynthesis. In terms of biological role, converts the free carboxyl group of a malonyl-thioester to its methyl ester by transfer of a methyl group from S-adenosyl-L-methionine (SAM). It allows to synthesize pimeloyl-ACP via the fatty acid synthetic pathway. The chain is Malonyl-[acyl-carrier protein] O-methyltransferase from Neorickettsia risticii (strain Illinois).